Reading from the N-terminus, the 529-residue chain is uncharacterized protein (529 aa).

The zn(2)-C6 fungal-type DNA-binding region spans 26–58 (CDSCRKQKTRCLAGSVEDENRACLRCRSLNMDC).

It localises to the nucleus. This is an uncharacterized protein from Schizosaccharomyces pombe (strain 972 / ATCC 24843) (Fission yeast).